Reading from the N-terminus, the 597-residue chain is Aspartate--tRNA(Asp/Asn) ligase (597 aa).

Glutamate 175 provides a ligand contact to L-aspartate. Residues 199 to 202 form an aspartate region; it reads QLFK. Arginine 221 is an L-aspartate binding site. ATP contacts are provided by residues 221-223 and glutamine 230; that span reads RDE. Histidine 453 provides a ligand contact to L-aspartate. Position 487 (glutamate 487) interacts with ATP. Residue arginine 494 coordinates L-aspartate. Residue 539–542 participates in ATP binding; sequence GWDR. The tract at residues 562-597 is disordered; sequence SGGGVDPLTDAPAPITPEQRKESGIDAKPKKKETKN. Residues 579 to 589 are compositionally biased toward basic and acidic residues; it reads EQRKESGIDAK.

Belongs to the class-II aminoacyl-tRNA synthetase family. Type 1 subfamily. As to quaternary structure, homodimer.

The protein resides in the cytoplasm. The catalysed reaction is tRNA(Asx) + L-aspartate + ATP = L-aspartyl-tRNA(Asx) + AMP + diphosphate. Functionally, aspartyl-tRNA synthetase with relaxed tRNA specificity since it is able to aspartylate not only its cognate tRNA(Asp) but also tRNA(Asn). Reaction proceeds in two steps: L-aspartate is first activated by ATP to form Asp-AMP and then transferred to the acceptor end of tRNA(Asp/Asn). This is Aspartate--tRNA(Asp/Asn) ligase from Corynebacterium kroppenstedtii (strain DSM 44385 / JCM 11950 / CIP 105744 / CCUG 35717).